The following is a 719-amino-acid chain: UvrABC system protein B (719 aa).

The region spanning 49 to 435 (RRINAGERDV…TGGEFVEQVI (387 aa)) is the Helicase ATP-binding domain. ATP is bound at residue 62-69 (GATGTGKS). The Beta-hairpin signature appears at 115-138 (YYDYYQPEAYIAQTDTYIEKDSSI). Positions 453–606 (QIDDLIGEIR…QIAYNEANGI (154 aa)) constitute a Helicase C-terminal domain. A disordered region spans residues 635–654 (GGSGRNASRGRRAQGEPGRA). In terms of domain architecture, UVR spans 674–709 (ADLIKDLTAQMMAAARDLQFELAARFRDEIADLKRE).

This sequence belongs to the UvrB family. Forms a heterotetramer with UvrA during the search for lesions. Interacts with UvrC in an incision complex.

It is found in the cytoplasm. Functionally, the UvrABC repair system catalyzes the recognition and processing of DNA lesions. A damage recognition complex composed of 2 UvrA and 2 UvrB subunits scans DNA for abnormalities. Upon binding of the UvrA(2)B(2) complex to a putative damaged site, the DNA wraps around one UvrB monomer. DNA wrap is dependent on ATP binding by UvrB and probably causes local melting of the DNA helix, facilitating insertion of UvrB beta-hairpin between the DNA strands. Then UvrB probes one DNA strand for the presence of a lesion. If a lesion is found the UvrA subunits dissociate and the UvrB-DNA preincision complex is formed. This complex is subsequently bound by UvrC and the second UvrB is released. If no lesion is found, the DNA wraps around the other UvrB subunit that will check the other stand for damage. The protein is UvrABC system protein B of Mycobacterium tuberculosis (strain CDC 1551 / Oshkosh).